A 300-amino-acid chain; its full sequence is 4-hydroxy-tetrahydrodipicolinate synthase (300 aa).

Pyruvate is bound at residue Thr-55. The active-site Proton donor/acceptor is the Tyr-143. Catalysis depends on Lys-171, which acts as the Schiff-base intermediate with substrate. A pyruvate-binding site is contributed by Ile-211.

It belongs to the DapA family. As to quaternary structure, homotetramer; dimer of dimers.

The protein localises to the cytoplasm. It catalyses the reaction L-aspartate 4-semialdehyde + pyruvate = (2S,4S)-4-hydroxy-2,3,4,5-tetrahydrodipicolinate + H2O + H(+). The protein operates within amino-acid biosynthesis; L-lysine biosynthesis via DAP pathway; (S)-tetrahydrodipicolinate from L-aspartate: step 3/4. Functionally, catalyzes the condensation of (S)-aspartate-beta-semialdehyde [(S)-ASA] and pyruvate to 4-hydroxy-tetrahydrodipicolinate (HTPA). The polypeptide is 4-hydroxy-tetrahydrodipicolinate synthase (Mycobacterium bovis (strain ATCC BAA-935 / AF2122/97)).